A 215-amino-acid chain; its full sequence is Lysozyme-like protein 5 (215 aa).

The first 17 residues, 1–17 (MKHFFITILLFCSVVSA), serve as a signal peptide directing secretion. The Ch-type lysozyme domain maps to 18 to 215 (ARNGIDINSP…GVSVDMNYIP (198 aa)). Catalysis depends on residues D23, D113, and E115.

The protein belongs to the glycosyl hydrolase 25 family.

Its function is as follows. Plays a role in resistance to Gram-positive bacteria S.aureus or B.thuringiensis infection. The sequence is that of Lysozyme-like protein 5 from Caenorhabditis elegans.